The following is a 370-amino-acid chain: MEGLKVTPLRGVYEEYGGKIVDFAGYELPTQFKGFLHEHHTVREKAGLFDVSHMGEAMVTGKDAGKFIQYLMTNDINVLKDNEVLYTFMCNEDGGVIDDLLVYKFAEDEFFLVINASNKDKDVKWIMDHKGDFDVEIVDVSDSIAQLAFQGPLAEEILQKIVDVDLQEIKFFKLKRDVLVDGKKCLVSRTGYTGEDGFEIYCKPEDAKELWHAILNAGKEEGAQPIGLGARDTLRFEASLLLYGNEMDETITPLEVGMGFFVKLKVEEDFIGKDALIKQKAEGVTRKLVGFELLDKGIPRHGYEVIKDGKVIGHVTTGYKSPTLNKAIGLALVEEQYSKIGTEFNIKVRKKKLKAVAIDKRFYTKKTKTK.

Belongs to the GcvT family. As to quaternary structure, the glycine cleavage system is composed of four proteins: P, T, L and H.

It catalyses the reaction N(6)-[(R)-S(8)-aminomethyldihydrolipoyl]-L-lysyl-[protein] + (6S)-5,6,7,8-tetrahydrofolate = N(6)-[(R)-dihydrolipoyl]-L-lysyl-[protein] + (6R)-5,10-methylene-5,6,7,8-tetrahydrofolate + NH4(+). Functionally, the glycine cleavage system catalyzes the degradation of glycine. This chain is Aminomethyltransferase, found in Clostridium botulinum (strain Kyoto / Type A2).